We begin with the raw amino-acid sequence, 91 residues long: Small ribosomal subunit protein uS19c (91 aa).

The protein belongs to the universal ribosomal protein uS19 family.

It localises to the plastid. Its subcellular location is the organellar chromatophore. Functionally, protein S19 forms a complex with S13 that binds strongly to the 16S ribosomal RNA. In Paulinella chromatophora, this protein is Small ribosomal subunit protein uS19c.